The chain runs to 232 residues: Phosphatidylserine decarboxylase proenzyme (232 aa).

Residue Ser-190 is the Schiff-base intermediate with substrate; via pyruvic acid of the active site. Residue Ser-190 is modified to Pyruvic acid (Ser); by autocatalysis.

Belongs to the phosphatidylserine decarboxylase family. PSD-A subfamily. Heterodimer of a large membrane-associated beta subunit and a small pyruvoyl-containing alpha subunit. The cofactor is pyruvate. Post-translationally, is synthesized initially as an inactive proenzyme. Formation of the active enzyme involves a self-maturation process in which the active site pyruvoyl group is generated from an internal serine residue via an autocatalytic post-translational modification. Two non-identical subunits are generated from the proenzyme in this reaction, and the pyruvate is formed at the N-terminus of the alpha chain, which is derived from the carboxyl end of the proenzyme. The post-translation cleavage follows an unusual pathway, termed non-hydrolytic serinolysis, in which the side chain hydroxyl group of the serine supplies its oxygen atom to form the C-terminus of the beta chain, while the remainder of the serine residue undergoes an oxidative deamination to produce ammonia and the pyruvoyl prosthetic group on the alpha chain.

It localises to the cell membrane. It catalyses the reaction a 1,2-diacyl-sn-glycero-3-phospho-L-serine + H(+) = a 1,2-diacyl-sn-glycero-3-phosphoethanolamine + CO2. Its pathway is phospholipid metabolism; phosphatidylethanolamine biosynthesis; phosphatidylethanolamine from CDP-diacylglycerol: step 2/2. Its function is as follows. Catalyzes the formation of phosphatidylethanolamine (PtdEtn) from phosphatidylserine (PtdSer). The polypeptide is Phosphatidylserine decarboxylase proenzyme (Cereibacter sphaeroides (strain ATCC 17023 / DSM 158 / JCM 6121 / CCUG 31486 / LMG 2827 / NBRC 12203 / NCIMB 8253 / ATH 2.4.1.) (Rhodobacter sphaeroides)).